A 424-amino-acid polypeptide reads, in one-letter code: Endochitinase 1 (424 aa).

Residues 1-22 (MPSLFAQSLAIIATLQATLGLA) form the signal peptide. Positions 39–402 (YVNAVYFTNW…GTSSNKLGGP (364 aa)) constitute a GH18 domain. N-linked (GlcNAc...) asparagine glycosylation is found at Asn74, Asn78, and Asn96. Chitin contacts are provided by residues 103–104 (GN) and 130–133 (GGWT). Glu172 serves as the catalytic Proton donor. Residues Tyr173 and 238–241 (MAYD) each bind chitin. 2 N-linked (GlcNAc...) asparagine glycosylation sites follow: Asn248 and Asn347. Trp379 provides a ligand contact to chitin. Residues 385–412 (RQGPDSLIGTSSNKLGGPDTTENLLNYP) are disordered. Residues 392–408 (IGTSSNKLGGPDTTENL) are compositionally biased toward polar residues.

Belongs to the glycosyl hydrolase 18 family. Chitinase class V subfamily.

It is found in the secreted. It carries out the reaction Random endo-hydrolysis of N-acetyl-beta-D-glucosaminide (1-&gt;4)-beta-linkages in chitin and chitodextrins.. Functionally, secreted chitinase involved in the degradation of chitin, a component of the cell walls of fungi and exoskeletal elements of some animals (including worms and arthropods). Participates in the infection process and directly acts in the penetration process of the host cuticle. The polypeptide is Endochitinase 1 (chit1) (Metarhizium robertsii (strain ARSEF 23 / ATCC MYA-3075) (Metarhizium anisopliae (strain ARSEF 23))).